Consider the following 89-residue polypeptide: MSLDTTEKQQLINTHQTHGTDTGSAEVQVAMLSERISRLSSHLQNNIHDFSSRQGLLKMIGRRKRLLSYMRNKSEQRYTEIIAKLGIRG.

A disordered region spans residues Met1–Ala25. A compositionally biased stretch (polar residues) spans Lys8 to Ala25.

The protein belongs to the universal ribosomal protein uS15 family. In terms of assembly, part of the 30S ribosomal subunit. Forms a bridge to the 50S subunit in the 70S ribosome, contacting the 23S rRNA.

In terms of biological role, one of the primary rRNA binding proteins, it binds directly to 16S rRNA where it helps nucleate assembly of the platform of the 30S subunit by binding and bridging several RNA helices of the 16S rRNA. Its function is as follows. Forms an intersubunit bridge (bridge B4) with the 23S rRNA of the 50S subunit in the ribosome. This is Small ribosomal subunit protein uS15 from Parasynechococcus marenigrum (strain WH8102).